Here is a 608-residue protein sequence, read N- to C-terminus: Glutamine--fructose-6-phosphate aminotransferase [isomerizing] (608 aa).

Cys-2 serves as the catalytic Nucleophile; for GATase activity. The region spanning 2 to 217 (CGIVGYIGDK…DHEIAIIKKD (216 aa)) is the Glutamine amidotransferase type-2 domain. 2 consecutive SIS domains span residues 285–424 (TKED…KKGT) and 453–598 (VIQK…VDKP). The active-site For Fru-6P isomerization activity is Lys-603.

In terms of assembly, homodimer.

It is found in the cytoplasm. The enzyme catalyses D-fructose 6-phosphate + L-glutamine = D-glucosamine 6-phosphate + L-glutamate. In terms of biological role, catalyzes the first step in hexosamine metabolism, converting fructose-6P into glucosamine-6P using glutamine as a nitrogen source. The sequence is that of Glutamine--fructose-6-phosphate aminotransferase [isomerizing] from Caldanaerobacter subterraneus subsp. tengcongensis (strain DSM 15242 / JCM 11007 / NBRC 100824 / MB4) (Thermoanaerobacter tengcongensis).